We begin with the raw amino-acid sequence, 128 residues long: Gas vesicle protein O (128 aa).

Residues Met1–Arg49 are disordered. Low complexity predominate over residues Asp7 to Asp22. Polar residues predominate over residues Ala29 to Gln41.

This sequence belongs to the gas vesicle GvpO family.

The protein localises to the gas vesicle. Functionally, a minor component of the gas vesicle. May play a role in transcription and/or RNA stability and in GV assembly. Gas vesicles are hollow, gas filled proteinaceous nanostructures found in some microorganisms. It is not clear what function gas vesicles perform in soil bacteria. This is Gas vesicle protein O from Streptomyces sp. (strain CB03234).